The chain runs to 568 residues: CDK5 and ABL1 enzyme substrate 1 (568 aa).

Low complexity predominate over residues 1–31 (MAAATATAGTAACSSSSSSRGGSTDAAATSG). Disordered regions lie at residues 1–94 (MAAA…PGAR) and 130–169 (PSLVPRVLGEPSQPPRSAPAVTGAQLQLPDGPGGAGQEEL). The interaction with TDRD7 stretch occupies residues 1–98 (MAAATATAGT…TKPGARARLS (98 aa)). The span at 33–45 (QPPPPPPATAPPE) shows a compositional bias: pro residues. Residues 46–56 (PLRKPRMDPRR) show a composition bias toward basic and acidic residues. Residues 140 to 427 (PSQPPRSAPA…TTVIDYVKPS (288 aa)) form an interaction with CDK3 region. Serine 248 is subject to Phosphoserine. The residue at position 274 (serine 274) is a Phosphoserine; by CDK2 and CDK3. Position 350 is a phosphothreonine (threonine 350).

Belongs to the cyclin family. In terms of assembly, found in a complex with p53/TP53. Found in a number of complexes with CDK2, CDK3, CDK5, ABL1, TDRD7, CDK17, CCNA1, CCNE1 and TP73. Interacts with CDK2, CDK3, CDK5, ABL1 and TDRD7. Post-translationally, phosphorylated on Ser-274 by CCNE1/CDK3. Phosphorylated on serine/threonine residues by CDK5 and on tyrosine residues by ABL1. Also phosphorylated in vitro by CCNA1/CDK2, CCNE1/CDK2, CCNA1/CDK3 and CCNE1/CDK3. Ubiquitous. Expressed in postnatal day 1 (P1), in postmitotic neurons of the subplate, cortex (V/VI) and marginal zone; in postnatal day 7 (P7), in all layers of the cerebral cortex and in the CA1 and CA2 regions of the hippocampus (at protein level). Highly expressed in brain, kidney, liver and lung.

It is found in the nucleus. It localises to the cytoplasm. The protein localises to the cell projection. Its subcellular location is the growth cone. In terms of biological role, cyclin-dependent kinase binding protein. Enhances cyclin-dependent kinase tyrosine phosphorylation by nonreceptor tyrosine kinases, such as that of CDK5 by activated ABL1, which leads to increased CDK5 activity and is critical for neuronal development, and that of CDK2 by WEE1, which leads to decreased CDK2 activity and growth inhibition. Positively affects neuronal outgrowth. Plays a role as a regulator for p53/p73-induced cell death. The sequence is that of CDK5 and ABL1 enzyme substrate 1 (Cables1) from Mus musculus (Mouse).